A 290-amino-acid chain; its full sequence is S-adenosylmethionine decarboxylase proenzyme (290 aa).

Ser138 (schiff-base intermediate with substrate; via pyruvic acid) is an active-site residue. Ser138 carries the pyruvic acid (Ser); by autocatalysis modification. His143 serves as the catalytic Proton acceptor; for processing activity. Residue Cys166 is the Proton donor; for catalytic activity of the active site.

Belongs to the prokaryotic AdoMetDC family. Type 2 subfamily. Heterooctamer of four alpha and four beta chains arranged as a tetramer of alpha/beta heterodimers. The cofactor is pyruvate. Is synthesized initially as an inactive proenzyme. Formation of the active enzyme involves a self-maturation process in which the active site pyruvoyl group is generated from an internal serine residue via an autocatalytic post-translational modification. Two non-identical subunits are generated from the proenzyme in this reaction, and the pyruvate is formed at the N-terminus of the alpha chain, which is derived from the carboxyl end of the proenzyme. The post-translation cleavage follows an unusual pathway, termed non-hydrolytic serinolysis, in which the side chain hydroxyl group of the serine supplies its oxygen atom to form the C-terminus of the beta chain, while the remainder of the serine residue undergoes an oxidative deamination to produce ammonia and the pyruvoyl group blocking the N-terminus of the alpha chain.

It catalyses the reaction S-adenosyl-L-methionine + H(+) = S-adenosyl 3-(methylsulfanyl)propylamine + CO2. Its pathway is amine and polyamine biosynthesis; S-adenosylmethioninamine biosynthesis; S-adenosylmethioninamine from S-adenosyl-L-methionine: step 1/1. Catalyzes the decarboxylation of S-adenosylmethionine to S-adenosylmethioninamine (dcAdoMet), the propylamine donor required for the synthesis of the polyamines spermine and spermidine from the diamine putrescine. The protein is S-adenosylmethionine decarboxylase proenzyme of Heliobacterium modesticaldum (strain ATCC 51547 / Ice1).